A 349-amino-acid polypeptide reads, in one-letter code: B3 domain-containing protein At5g24050 (349 aa).

The TF-B3 DNA-binding region spans 240-341; that stretch reads FNNLLRNDFL…ILCFAMEQSS (102 aa).

It is found in the nucleus. This Arabidopsis thaliana (Mouse-ear cress) protein is B3 domain-containing protein At5g24050.